Reading from the N-terminus, the 940-residue chain is Isoleucine--tRNA ligase (940 aa).

The 'HIGH' region signature appears at 58 to 68 (PYANGDIHIGH). An L-isoleucyl-5'-AMP-binding site is contributed by Glu564. The short motif at 605–609 (KMSKS) is the 'KMSKS' region element. An ATP-binding site is contributed by Lys608. Zn(2+) is bound by residues Cys903, Cys906, Cys923, and Cys926.

The protein belongs to the class-I aminoacyl-tRNA synthetase family. IleS type 1 subfamily. Monomer. It depends on Zn(2+) as a cofactor.

The protein localises to the cytoplasm. The catalysed reaction is tRNA(Ile) + L-isoleucine + ATP = L-isoleucyl-tRNA(Ile) + AMP + diphosphate. Catalyzes the attachment of isoleucine to tRNA(Ile). As IleRS can inadvertently accommodate and process structurally similar amino acids such as valine, to avoid such errors it has two additional distinct tRNA(Ile)-dependent editing activities. One activity is designated as 'pretransfer' editing and involves the hydrolysis of activated Val-AMP. The other activity is designated 'posttransfer' editing and involves deacylation of mischarged Val-tRNA(Ile). In Shewanella pealeana (strain ATCC 700345 / ANG-SQ1), this protein is Isoleucine--tRNA ligase.